The primary structure comprises 73 residues: MKPSTNRMLTRIKSVYMFIQEKGLVTTQELVDEFGITPRTIQRDLNVLAYNDLVHSPSRGKWETTRKKVKITS.

Residues 8–63 (MLTRIKSVYMFIQEKGLVTTQELVDEFGITPRTIQRDLNVLAYNDLVHSPSRGKWE) enclose the HTH deoR-type domain. A DNA-binding region (H-T-H motif) is located at residues 25 to 44 (VTTQELVDEFGITPRTIQRD).

This is an uncharacterized protein from Bacillus subtilis (strain 168).